The chain runs to 115 residues: Salivary protein gSG6 (115 aa).

Residues 1 to 28 (MAIRVELLLAMVLLPLLLLESVVPHAAA) form the signal peptide.

In terms of tissue distribution, female saliva (at protein level). Distal-lateral lobes of female salivary gland (at protein level). Not detected in male salivary gland (at protein level).

The protein resides in the secreted. Required for efficient probing and blood feeding. This Anopheles gambiae (African malaria mosquito) protein is Salivary protein gSG6.